The following is a 282-amino-acid chain: Ammonia transport outward protein 2 (282 aa).

Residues 1–34 form a disordered region; the sequence is MSDREQSSGNTAFENPKALDSSEGEFISENNDQS. Ser2 bears the N-acetylserine mark. Phosphoserine occurs at positions 2, 7, 21, 22, 28, and 40. At 2–86 the chain is on the extracellular side; it reads SDREQSSGNT…GLAPAPVHKF (85 aa). Residues 87 to 107 traverse the membrane as a helical segment; it reads ANPAPLGLSGFALTTFVLSMF. The Cytoplasmic segment spans residues 108–119; the sequence is NARAQGITIPNV. A helical membrane pass occupies residues 120–140; sequence VVGCAMFYGGLVQLIAGIWEI. Residues 141–150 are Extracellular-facing; sequence ALENTFGGTA. The helical transmembrane segment at 151–171 threads the bilayer; the sequence is LCSFGGFWLSFGAIYIPWFGI. Over 172 to 184 the chain is Cytoplasmic; sequence LDAYKDKESDLGN. Residues 185 to 205 traverse the membrane as a helical segment; sequence ALGFYLLGWALFTFGLSVCTM. The Extracellular segment spans residues 206–207; sequence KS. Residues 208–228 form a helical membrane-spanning segment; it reads TIMFFALFFLLAVTFLLLSIA. The Cytoplasmic segment spans residues 229–238; sequence NFTGEVGVTR. The chain crosses the membrane as a helical span at residues 239–259; that stretch reads AGGVLGVIVAFIAWYNAYAGI. Residues 260-282 are Extracellular-facing; that stretch reads ATRQNSYIMVHPFALPSNDKVFF.

It belongs to the acetate uptake transporter (AceTr) (TC 2.A.96) family.

It is found in the cell membrane. In terms of biological role, transporter protein required for ammonia export. Involved in acetate resistance. The protein is Ammonia transport outward protein 2 (ATO2) of Saccharomyces cerevisiae (strain ATCC 204508 / S288c) (Baker's yeast).